The chain runs to 465 residues: Cerebellar degeneration-related protein 2-like (465 aa).

3 coiled-coil regions span residues 31–64, 91–142, and 188–266; these read AAEL…HEIE, ARDL…LEQL, and LEQE…YLLA. Residues 282-315 are disordered; that stretch reads APEADDPQPGSGDDSNAQDGVSSPAASPSHAVRK. Ser-308, Ser-318, and Ser-344 each carry phosphoserine. The stretch at 350–377 forms a coiled coil; it reads MSILREVDEQYHALLEKYEELLSKCRQH. The tract at residues 382–421 is disordered; sequence RHAGVQTSRPISRDSSWRDLLGGEESPGEGKAGEKSLSQH. Ser-407 carries the post-translational modification Phosphoserine.

Belongs to the CDR2 family.

This Mus musculus (Mouse) protein is Cerebellar degeneration-related protein 2-like (Cdr2l).